The chain runs to 223 residues: MRKMGVVIINFKAYKEGFGKRALELAKIAENVASRCDEYVGIAVSFLDLPVIAREVSIDVYAQHVDAVGFGSHTGRINADMIAEYGAKGSLVNHSERRLKLADIEFNVSRLRELGLTSVVCTNNVPTTAAAAALNPDFVAVEPPELIGSGIPVSKAEPEVVENSVKAAKEVNKSVRVLCGAGITTHEDYVKALELGAEGVLLASGVVKAEDQKRALEELVGLL.

Position 10-12 (10-12 (NFK)) interacts with substrate. His-94 serves as the catalytic Electrophile. Residue Glu-142 is the Proton acceptor of the active site. Substrate-binding positions include Ile-147, Gly-182, and 203 to 204 (AS).

Belongs to the triosephosphate isomerase family. In terms of assembly, homotetramer; dimer of dimers.

The protein localises to the cytoplasm. It catalyses the reaction D-glyceraldehyde 3-phosphate = dihydroxyacetone phosphate. Its pathway is carbohydrate biosynthesis; gluconeogenesis. It participates in carbohydrate degradation; glycolysis; D-glyceraldehyde 3-phosphate from glycerone phosphate: step 1/1. Functionally, involved in the gluconeogenesis. Catalyzes stereospecifically the conversion of dihydroxyacetone phosphate (DHAP) to D-glyceraldehyde-3-phosphate (G3P). This chain is Triosephosphate isomerase, found in Archaeoglobus fulgidus (strain ATCC 49558 / DSM 4304 / JCM 9628 / NBRC 100126 / VC-16).